The primary structure comprises 212 residues: Pyridoxine/pyridoxamine 5'-phosphate oxidase (212 aa).

Residues 8-11 (RREY) and Lys66 contribute to the substrate site. FMN is bound by residues 61–66 (RIVLLK), 76–77 (FT), Arg82, Lys83, and Gln105. Substrate is bound by residues Tyr123, Arg127, and Ser131. Residues 140-141 (QS) and Trp185 each bind FMN. 191–193 (RLH) lines the substrate pocket. Arg195 provides a ligand contact to FMN.

The protein belongs to the pyridoxamine 5'-phosphate oxidase family. As to quaternary structure, homodimer. It depends on FMN as a cofactor.

It carries out the reaction pyridoxamine 5'-phosphate + O2 + H2O = pyridoxal 5'-phosphate + H2O2 + NH4(+). The catalysed reaction is pyridoxine 5'-phosphate + O2 = pyridoxal 5'-phosphate + H2O2. The protein operates within cofactor metabolism; pyridoxal 5'-phosphate salvage; pyridoxal 5'-phosphate from pyridoxamine 5'-phosphate: step 1/1. It participates in cofactor metabolism; pyridoxal 5'-phosphate salvage; pyridoxal 5'-phosphate from pyridoxine 5'-phosphate: step 1/1. Functionally, catalyzes the oxidation of either pyridoxine 5'-phosphate (PNP) or pyridoxamine 5'-phosphate (PMP) into pyridoxal 5'-phosphate (PLP). This is Pyridoxine/pyridoxamine 5'-phosphate oxidase from Shewanella putrefaciens (strain CN-32 / ATCC BAA-453).